We begin with the raw amino-acid sequence, 176 residues long: MDAENDSPLPKPQWIYRVGIGQDSHRFLSESSAKPCILAGVIFENSPGFQANSDGDIVFHAICNAISSVTHRIILGEVADELFHTRGITDSSVYLSEAIKSLKSNQMISHVAITIEGNRPKFLPKLSAMRQSIASALNIPLGSVGITATSGEGLSDFGCGDGVQCFCVLTVAEYCN.

Residues D23, H25, and H60 each coordinate a divalent metal cation. 23-25 (DSH) contributes to the 4-CDP-2-C-methyl-D-erythritol 2-phosphate binding site. A 4-CDP-2-C-methyl-D-erythritol 2-phosphate-binding site is contributed by 149 to 152 (TSGE).

The protein belongs to the IspF family. Homotrimer. A divalent metal cation is required as a cofactor.

The catalysed reaction is 4-CDP-2-C-methyl-D-erythritol 2-phosphate = 2-C-methyl-D-erythritol 2,4-cyclic diphosphate + CMP. It participates in isoprenoid biosynthesis; isopentenyl diphosphate biosynthesis via DXP pathway; isopentenyl diphosphate from 1-deoxy-D-xylulose 5-phosphate: step 4/6. Its function is as follows. Involved in the biosynthesis of isopentenyl diphosphate (IPP) and dimethylallyl diphosphate (DMAPP), two major building blocks of isoprenoid compounds. Catalyzes the conversion of 4-diphosphocytidyl-2-C-methyl-D-erythritol 2-phosphate (CDP-ME2P) to 2-C-methyl-D-erythritol 2,4-cyclodiphosphate (ME-CPP) with a corresponding release of cytidine 5-monophosphate (CMP). The polypeptide is 2-C-methyl-D-erythritol 2,4-cyclodiphosphate synthase (Chlamydia caviae (strain ATCC VR-813 / DSM 19441 / 03DC25 / GPIC) (Chlamydophila caviae)).